The sequence spans 92 residues: Probable Fe(2+)-trafficking protein (92 aa).

Belongs to the Fe(2+)-trafficking protein family.

In terms of biological role, could be a mediator in iron transactions between iron acquisition and iron-requiring processes, such as synthesis and/or repair of Fe-S clusters in biosynthetic enzymes. The sequence is that of Probable Fe(2+)-trafficking protein from Shewanella woodyi (strain ATCC 51908 / MS32).